The primary structure comprises 257 residues: Lysine-rich coiled-coil protein 1 (257 aa).

The tract at residues 145 to 257 (NTSAHQASYK…MLWDQSILGF (113 aa)) is disordered. Residues 152–162 (SYKHIHQKRKR) are compositionally biased toward basic residues. 4 stretches are compositionally biased toward basic and acidic residues: residues 163-176 (HTEE…EERP), 183-193 (ACEEIDLDKYK), 200-212 (TEAE…TEKL), and 219-228 (RSRDVASKKE). Positions 210-248 (EKLKNRKEKRSRDVASKKEERKRRKEKKEQGQERTEEEM) form a coiled coil.

In Bos taurus (Bovine), this protein is Lysine-rich coiled-coil protein 1 (KRCC1).